We begin with the raw amino-acid sequence, 344 residues long: NADH-ubiquinone oxidoreductase chain 2 (344 aa).

A run of 11 helical transmembrane segments spans residues 1–21 (MNPL…TITL), 24–44 (FHWL…IPLM), 59–79 (YFLT…ISAW), 94–114 (MNIL…HFWI), 121–141 (ISLP…MALL), 150–170 (LNLT…GGIG), 177–197 (IMAF…KFDP), 201–221 (LLNF…LTTI), 245–265 (LILL…KLLI), 273–293 (NATL…FFYI), and 324–344 (TAIM…LLLL).

The protein belongs to the complex I subunit 2 family.

The protein resides in the mitochondrion inner membrane. The enzyme catalyses a ubiquinone + NADH + 5 H(+)(in) = a ubiquinol + NAD(+) + 4 H(+)(out). Functionally, core subunit of the mitochondrial membrane respiratory chain NADH dehydrogenase (Complex I) that is believed to belong to the minimal assembly required for catalysis. Complex I functions in the transfer of electrons from NADH to the respiratory chain. The immediate electron acceptor for the enzyme is believed to be ubiquinone. This Aquarana catesbeiana (American bullfrog) protein is NADH-ubiquinone oxidoreductase chain 2 (MT-ND2).